The primary structure comprises 378 residues: Probable mannosyltransferase MNT3 (378 aa).

At Met-1–His-4 the chain is on the cytoplasmic side. The helical; Signal-anchor for type II membrane protein transmembrane segment at Leu-5 to Phe-25 threads the bilayer. Residues Lys-26–Asn-378 lie on the Lumenal side of the membrane. N-linked (GlcNAc...) asparagine glycosylation is found at Asn-73 and Asn-149.

The protein belongs to the glycosyltransferase 15 family.

The protein resides in the membrane. Its function is as follows. Transfers an alpha-D-mannosyl residue from GDP-mannose into lipid-linked oligosaccharide, forming an alpha-(1-&gt;2)-D-mannosyl-D-mannose linkage. The chain is Probable mannosyltransferase MNT3 (MNT3) from Candida albicans (strain SC5314 / ATCC MYA-2876) (Yeast).